The chain runs to 115 residues: Urease subunit beta (115 aa).

Belongs to the urease beta subunit family. Heterotrimer of UreA (gamma), UreB (beta) and UreC (alpha) subunits. Three heterotrimers associate to form the active enzyme.

The protein localises to the cytoplasm. It carries out the reaction urea + 2 H2O + H(+) = hydrogencarbonate + 2 NH4(+). Its pathway is nitrogen metabolism; urea degradation; CO(2) and NH(3) from urea (urease route): step 1/1. The polypeptide is Urease subunit beta (Arthrobacter sp. (strain FB24)).